A 474-amino-acid polypeptide reads, in one-letter code: Aspartate ammonia-lyase (474 aa).

L-aspartate contacts are provided by Thr-105, Ser-144, Thr-145, Asn-146, and Thr-191. The interval 322 to 331 (GSSIMPGKVN) is SS loop. Ser-323 functions as the Proton acceptor in the catalytic mechanism. Residues Ser-324 and Lys-329 each contribute to the L-aspartate site.

It belongs to the class-II fumarase/aspartase family. Aspartase subfamily. In terms of assembly, homotetramer.

The catalysed reaction is L-aspartate = fumarate + NH4(+). It catalyses the reaction L-phenylalanine = (E)-cinnamate + NH4(+). Its activity is regulated as follows. Does not require any divalent metal ion for activation of catalysis, but the activity is slightly increased in the presence of Mg(2+), Mn(2+), Ca(2+) or Co(2+). In terms of biological role, catalyzes the reversible conversion of L-aspartate to fumarate and ammonia. Can also utilize L-phenylalanine to form cinnamic acid. Exhibits the highest specific activity towards L-phenylalanine, but catalytic efficiency is 3-fold higher with L-aspartate. The sequence is that of Aspartate ammonia-lyase from Pseudomonas aeruginosa (strain ATCC 15692 / DSM 22644 / CIP 104116 / JCM 14847 / LMG 12228 / 1C / PRS 101 / PAO1).